A 79-amino-acid polypeptide reads, in one-letter code: Virulence protein MsgA (79 aa).

Belongs to the DinI family.

Affects survival in macrophages. The chain is Virulence protein MsgA (msgA) from Salmonella typhi.